The chain runs to 538 residues: Syncytin-2 (538 aa).

Positions 1–15 (MGLLLLVLILTPSLA) are cleaved as a signal peptide. Over 16-478 (AYRHPDFPLL…GWLNWEGTWK (463 aa)) the chain is Extracellular. The CXXC signature appears at 43–46 (CWLC). Intrachain disulfides connect cysteine 43-cysteine 46, cysteine 43-cysteine 439, and cysteine 431-cysteine 438. Residues asparagine 133, asparagine 146, asparagine 177, asparagine 220, asparagine 241, asparagine 247, asparagine 312, and asparagine 332 are each glycosylated (N-linked (GlcNAc...) asparagine). The segment at 354-374 (FIPLLAGLGILAGTGTGIAGI) is fusion peptide. Positions 414-430 (LQNRRGLDMLTAAQGGI) match the CKS-17 motif. Positions 431–439 (CLALDEKCC) match the CX6CC motif. Asparagine 443 carries N-linked (GlcNAc...) asparagine glycosylation. Residues 479–499 (WFSWVLPLTGPLVSLLLLLLF) traverse the membrane as a helical segment. Over 500–538 (GPCLLNLITQFVSSRLQAIKLQTNLSAGRHPRNIQESPF) the chain is Cytoplasmic.

The protein belongs to the gamma type-C retroviral envelope protein family. HERV class-I FRD env subfamily. As to quaternary structure, the surface and transmembrane proteins form a heterodimer. They are attached by non-covalent interactions or by a labile interchain disulfide bond. Interacts with MFSD2A. Post-translationally, specific enzymatic cleavages in vivo yield the mature SU and TM proteins. The CXXC motif is highly conserved across a broad range of retroviral envelope proteins. It is thought to participate in the formation of a labile disulfide bond possibly with the CX6CC motif present in the transmembrane protein. Isomerization of the intersubunit disulfide bond to an SU intrachain disulfide bond is thought to occur upon receptor recognition in order to allow membrane fusion. As to expression, expressed at higher level in placenta. Expressed at lower level in adrenal, bone marrow, brain, breast, colon, kidney, lung, ovary, peripheral blood lymphocytes, prostate, skin, spleen, testis, thymus, thyroid, trachea.

It localises to the virion. Its subcellular location is the cell membrane. This endogenous retroviral envelope protein has retained its original fusogenic properties and participates in trophoblast fusion and the formation of a syncytium during placenta morphogenesis. The interaction with MFSD2A is apparently important for this process. In terms of biological role, endogenous envelope proteins may have kept, lost or modified their original function during evolution but this one can still make pseudotypes with MLV, HIV-1 or SIV-1 virions and confer infectivity. Retroviral envelope proteins mediate receptor recognition and membrane fusion during early infection. The surface protein mediates receptor recognition, while the transmembrane protein anchors the envelope heterodimer to the viral membrane through one transmembrane domain. The other hydrophobic domain, called fusion peptide, mediates fusion of the viral membrane with the target cell membrane. The polypeptide is Syncytin-2 (ERVFRD-1) (Homo sapiens (Human)).